The following is a 1020-amino-acid chain: Fanconi-associated nuclease 1 (1020 aa).

The span at 1–11 (MPSQRKSPDQK) shows a compositional bias: basic and acidic residues. A disordered region spans residues 1–24 (MPSQRKSPDQKRPRRSLSTSKTAK). Positions 14-22 (RRSLSTSKT) match the D-box motif. The UBZ4-type zinc-finger motif lies at 41–69 (KLACSTCHKMVPRYDLIRHLDESCANNGV). Residues cysteine 44, cysteine 47, histidine 59, and cysteine 64 each contribute to the Zn(2+) site. The interval 173 to 208 (KNEGLASQCPQTSPSTPGTSLTDNCPEMEDKDEVLN) is disordered. Residues 180–195 (QCPQTSPSTPGTSLTD) show a composition bias toward polar residues. The short motif at 212-214 (KEN) is the KEN box element. The segment covering 224 to 242 (ENASEQKVKNNKITGDESQ) has biased composition (basic and acidic residues). Disordered stretches follow at residues 224–252 (ENASEQKVKNNKITGDESQKASCGEPALT) and 269–288 (LVSNTKSSPGDTLVKQESAR). Residues 269–278 (LVSNTKSSPG) show a composition bias toward polar residues. Positions 673 to 737 (SSRAVEVLER…AIRCIREGLA (65 aa)) form a coiled coil. Mn(2+)-binding residues include glutamate 837, aspartate 963, glutamate 978, and valine 979. A VRR-NUC domain is found at 898 to 1010 (AESLRAWVGE…GADVEVCHVV (113 aa)).

Belongs to the FAN1 family. As to quaternary structure, interacts with FANCD2 (when monoubiquitinated). Interacts with FANCI, MLH1, MLH3 and PMS2. Mn(2+) is required as a cofactor. It depends on Mg(2+) as a cofactor. In terms of processing, ubiquitinated and degraded during mitotic exit by the APC/C-Cdh1 complex.

Its subcellular location is the nucleus. The enzyme catalyses Hydrolytically removes 5'-nucleotides successively from the 3'-hydroxy termini of 3'-hydroxy-terminated oligonucleotides.. Its function is as follows. Nuclease required for the repair of DNA interstrand cross-links (ICL) recruited at sites of DNA damage by monoubiquitinated FANCD2. Specifically involved in repair of ICL-induced DNA breaks by being required for efficient homologous recombination, probably in the resolution of homologous recombination intermediates. Not involved in DNA double-strand breaks resection. Acts as a 5'-3' exonuclease that anchors at a cut end of DNA and cleaves DNA successively at every third nucleotide, allowing to excise an ICL from one strand through flanking incisions. Probably keeps excising with 3'-flap annealing until it reaches and unhooks the ICL. Acts at sites that have a 5'-terminal phosphate anchor at a nick or a 1- or 2-nucleotide flap and is augmented by a 3' flap. Also has endonuclease activity toward 5'-flaps. This is Fanconi-associated nuclease 1 from Mus musculus (Mouse).